The primary structure comprises 746 residues: Centromere protein I (746 aa).

Residues 1 to 24 form a disordered region; it reads MATQRVTRNSQQQNRISQGSNSRQ.

The protein belongs to the CENP-I/CTF3 family. As to quaternary structure, component of the CENPA-CAD complex, composed of CENPI, CENPK, CENPL, CENPO, CENPP, CENPQ, CENPR and CENPS. The CENPA-CAD complex interacts with the CENPA-NAC complex, at least composed of CENPA, CENPC, CENPH, CENPM, CENPN, CENPT and CENPU. Interacts with SENP6. In terms of processing, sumoylated. Sumoylated form can be polyubiquitinated by RNF4, leading to its degradation. Desumoylation by SENP6 prevents its degradation.

The protein resides in the nucleus. It localises to the chromosome. Its subcellular location is the centromere. Functionally, component of the CENPA-CAD (nucleosome distal) complex, a complex recruited to centromeres which is involved in assembly of kinetochore proteins, mitotic progression and chromosome segregation. May be involved in incorporation of newly synthesized CENPA into centromeres via its interaction with the CENPA-NAC complex. Required for the localization of CENPF, MAD1L1 and MAD2 (MAD2L1 or MAD2L2) to kinetochores. Involved in the response of gonadal tissues to follicle-stimulating hormone. The polypeptide is Centromere protein I (Cenpi) (Mus musculus (Mouse)).